We begin with the raw amino-acid sequence, 413 residues long: Alpha-1-antitrypsin 1-4 (413 aa).

Residues 1–24 (MTPSISWSLLLLAGLCCLVPSFLA) form the signal peptide. N-linked (GlcNAc...) asparagine glycans are attached at residues N64, N101, and N265. The segment at 368 to 387 (AATVLQVATYSMPPIVRFDH) is RCL.

This sequence belongs to the serpin family.

It is found in the secreted. In terms of biological role, inhibitor of serine proteases. Can inhibit trypsin and chymotrypsin; relatively ineffective against elastase. The chain is Alpha-1-antitrypsin 1-4 (Serpina1d) from Mus musculus (Mouse).